The following is an 88-amino-acid chain: Small ribosomal subunit protein uS15 (88 aa).

This sequence belongs to the universal ribosomal protein uS15 family. In terms of assembly, part of the 30S ribosomal subunit. Forms a bridge to the 50S subunit in the 70S ribosome, contacting the 23S rRNA.

Its function is as follows. One of the primary rRNA binding proteins, it binds directly to 16S rRNA where it helps nucleate assembly of the platform of the 30S subunit by binding and bridging several RNA helices of the 16S rRNA. Functionally, forms an intersubunit bridge (bridge B4) with the 23S rRNA of the 50S subunit in the ribosome. The protein is Small ribosomal subunit protein uS15 of Mycoplasma mobile (strain ATCC 43663 / 163K / NCTC 11711) (Mesomycoplasma mobile).